Here is an 849-residue protein sequence, read N- to C-terminus: Leucine--tRNA ligase (849 aa).

A 'HIGH' region motif is present at residues 44–54 (PYPSGRIHMGH). The 'KMSKS' region motif lies at 620-624 (KMSKS). Residue K623 participates in ATP binding.

This sequence belongs to the class-I aminoacyl-tRNA synthetase family.

Its subcellular location is the cytoplasm. It carries out the reaction tRNA(Leu) + L-leucine + ATP = L-leucyl-tRNA(Leu) + AMP + diphosphate. The polypeptide is Leucine--tRNA ligase (Sphingopyxis alaskensis (strain DSM 13593 / LMG 18877 / RB2256) (Sphingomonas alaskensis)).